We begin with the raw amino-acid sequence, 556 residues long: MPPERRRRMKLDRRTGAKPKRKPGMRPDWKAGAGPGGPPQKPAPSSQRKPPARPSAAAAAIAVAAAEEERRLRQRNRLRLEEDKPAVERCLEELVFGDVENDEDALLRRLRGPRVQEHEDSGDSEVENEAKGNFPPQKKPVWVDEEDEDEEMVDMMNNRFRKDMMKNASESKLSKDNLKKRLKEEFQHAMGGVPAWAETTKRKTSSDDESEEDEDDLLQRTGNFISTSTSLPRGILKMKNCQHANAERPTVARISSVQFHPGAQIVMVAGLDNAVSLFQVDGKTNPKIQSIYLERFPIFKACFSANGEEVLATSTHSKVLYVYDMLAGKLIPVHQVRGLKEKIVRSFEVSPDGSFLLINGIAGYLHLLAMKTKELIGSMKINGRVAASTFSSDSKKVYASSGDGEVYVWDVNSRKCLNRFVDEGSLYGLSIATSRNGQYVACGSNCGVVNIYNQDSCLQETNPKPIKAIMNLVTGVTSLTFNPTTEILAIASEKMKEAVRLVHLPSCTVFSNFPVIKNKNISHVHTMDFSPRSGYFALGNEKGKALMYRLHHYSDF.

A compositionally biased stretch (basic residues) spans 1 to 24 (MPPERRRRMKLDRRTGAKPKRKPG). Residues 1-70 (MPPERRRRMK…IAVAAAEEER (70 aa)) are disordered. Over residues 43 to 65 (APSSQRKPPARPSAAAAAIAVAA) the composition is skewed to low complexity. Lys84 is covalently cross-linked (Glycyl lysine isopeptide (Lys-Gly) (interchain with G-Cter in SUMO2)). Positions 111 to 143 (RGPRVQEHEDSGDSEVENEAKGNFPPQKKPVWV) are disordered. Phosphoserine occurs at positions 121 and 124. Glycyl lysine isopeptide (Lys-Gly) (interchain with G-Cter in SUMO2) cross-links involve residues Lys183 and Lys201. The interval 193–219 (VPAWAETTKRKTSSDDESEEDEDDLLQ) is disordered. The residue at position 204 (Thr204) is a Phosphothreonine. A phosphoserine mark is found at Ser205, Ser206, and Ser210. Positions 207-216 (DDESEEDEDD) are enriched in acidic residues. Thr221 is subject to Phosphothreonine. WD repeat units lie at residues 249 to 288 (PTVARISSVQFHPGAQIVMVAGLDNAVSLFQVDGKTNPKI), 293 to 333 (LERF…LIPV), 339 to 380 (LKEK…GSMK), 381 to 419 (INGRVAASTFSSDSKKVYASSGDGEVYVWDVNSRKCLNR), 421 to 462 (VDEG…QETN), and 471 to 512 (NLVT…VFSN). Residue Lys517 forms a Glycyl lysine isopeptide (Lys-Gly) (interchain with G-Cter in SUMO2) linkage.

It belongs to the WD repeat UTP18 family. In terms of assembly, part of the small subunit (SSU) processome, composed of more than 70 proteins and the RNA chaperone small nucleolar RNA (snoRNA) U3.

The protein resides in the nucleus. Its subcellular location is the nucleolus. Its function is as follows. Part of the small subunit (SSU) processome, first precursor of the small eukaryotic ribosomal subunit. During the assembly of the SSU processome in the nucleolus, many ribosome biogenesis factors, an RNA chaperone and ribosomal proteins associate with the nascent pre-rRNA and work in concert to generate RNA folding, modifications, rearrangements and cleavage as well as targeted degradation of pre-ribosomal RNA by the RNA exosome. Involved in nucleolar processing of pre-18S ribosomal RNA. This is U3 small nucleolar RNA-associated protein 18 homolog from Homo sapiens (Human).